Reading from the N-terminus, the 1291-residue chain is DNA-directed RNA polymerase subunit beta (1291 aa).

It belongs to the RNA polymerase beta chain family. As to quaternary structure, the RNAP catalytic core consists of 2 alpha, 1 beta, 1 beta' and 1 omega subunit. When a sigma factor is associated with the core the holoenzyme is formed, which can initiate transcription.

It carries out the reaction RNA(n) + a ribonucleoside 5'-triphosphate = RNA(n+1) + diphosphate. DNA-dependent RNA polymerase catalyzes the transcription of DNA into RNA using the four ribonucleoside triphosphates as substrates. This is DNA-directed RNA polymerase subunit beta from Cytophaga hutchinsonii (strain ATCC 33406 / DSM 1761 / CIP 103989 / NBRC 15051 / NCIMB 9469 / D465).